Here is a 1167-residue protein sequence, read N- to C-terminus: Topoisomerase 1-associated factor 1 (1167 aa).

Disordered stretches follow at residues 332–353, 563–594, 889–969, 981–1093, and 1105–1167; these read SKRW…NNDF, SRRR…DYAE, KYSH…LENT, YVHA…DAID, and FDDD…SDSE. The segment covering 572–582 has biased composition (basic and acidic residues); sequence REEQLVNKGSD. Composition is skewed to acidic residues over residues 583 to 593 and 949 to 958; these read EEQESEDEDYA and EEEPVDEETL. Basic and acidic residues-rich tracts occupy residues 959 to 969 and 996 to 1013; these read EERRQARLENT and EFFR…ERIK. Residues 1062 to 1074 are compositionally biased toward acidic residues; that stretch reads ELEEDDILMDDME. Positions 1078–1088 are enriched in polar residues; sequence RASSGEYSSND. Over residues 1110-1127 the composition is skewed to basic and acidic residues; the sequence is AFGRDRDKDETSVDRDGA.

Belongs to the timeless family.

The protein localises to the nucleus. In terms of biological role, involved in chromosome segregation during meiosis and DNA damage repair. This Emericella nidulans (strain FGSC A4 / ATCC 38163 / CBS 112.46 / NRRL 194 / M139) (Aspergillus nidulans) protein is Topoisomerase 1-associated factor 1 (tof1).